The primary structure comprises 468 residues: ATP synthase subunit beta (468 aa).

155 to 162 (GGAGVGKT) serves as a coordination point for ATP.

This sequence belongs to the ATPase alpha/beta chains family. As to quaternary structure, F-type ATPases have 2 components, CF(1) - the catalytic core - and CF(0) - the membrane proton channel. CF(1) has five subunits: alpha(3), beta(3), gamma(1), delta(1), epsilon(1). CF(0) has three main subunits: a(1), b(2) and c(9-12). The alpha and beta chains form an alternating ring which encloses part of the gamma chain. CF(1) is attached to CF(0) by a central stalk formed by the gamma and epsilon chains, while a peripheral stalk is formed by the delta and b chains.

The protein localises to the cell membrane. The enzyme catalyses ATP + H2O + 4 H(+)(in) = ADP + phosphate + 5 H(+)(out). Produces ATP from ADP in the presence of a proton gradient across the membrane. The catalytic sites are hosted primarily by the beta subunits. This Streptococcus equi subsp. zooepidemicus (strain H70) protein is ATP synthase subunit beta.